The sequence spans 297 residues: Aspartate carbamoyltransferase catalytic subunit (297 aa).

The carbamoyl phosphate site is built by arginine 49 and threonine 50. Position 77 (lysine 77) interacts with L-aspartate. Carbamoyl phosphate-binding residues include arginine 99, histidine 129, and glutamine 132. Arginine 162 and arginine 215 together coordinate L-aspartate. Carbamoyl phosphate is bound by residues glycine 256 and proline 257.

This sequence belongs to the aspartate/ornithine carbamoyltransferase superfamily. ATCase family. As to quaternary structure, heterododecamer (2C3:3R2) of six catalytic PyrB chains organized as two trimers (C3), and six regulatory PyrI chains organized as three dimers (R2).

It catalyses the reaction carbamoyl phosphate + L-aspartate = N-carbamoyl-L-aspartate + phosphate + H(+). The protein operates within pyrimidine metabolism; UMP biosynthesis via de novo pathway; (S)-dihydroorotate from bicarbonate: step 2/3. Its function is as follows. Catalyzes the condensation of carbamoyl phosphate and aspartate to form carbamoyl aspartate and inorganic phosphate, the committed step in the de novo pyrimidine nucleotide biosynthesis pathway. The sequence is that of Aspartate carbamoyltransferase catalytic subunit from Legionella pneumophila (strain Lens).